The sequence spans 99 residues: Aspartyl/glutamyl-tRNA(Asn/Gln) amidotransferase subunit C (99 aa).

Belongs to the GatC family. Heterotrimer of A, B and C subunits.

It catalyses the reaction L-glutamyl-tRNA(Gln) + L-glutamine + ATP + H2O = L-glutaminyl-tRNA(Gln) + L-glutamate + ADP + phosphate + H(+). It carries out the reaction L-aspartyl-tRNA(Asn) + L-glutamine + ATP + H2O = L-asparaginyl-tRNA(Asn) + L-glutamate + ADP + phosphate + 2 H(+). Its function is as follows. Allows the formation of correctly charged Asn-tRNA(Asn) or Gln-tRNA(Gln) through the transamidation of misacylated Asp-tRNA(Asn) or Glu-tRNA(Gln) in organisms which lack either or both of asparaginyl-tRNA or glutaminyl-tRNA synthetases. The reaction takes place in the presence of glutamine and ATP through an activated phospho-Asp-tRNA(Asn) or phospho-Glu-tRNA(Gln). The protein is Aspartyl/glutamyl-tRNA(Asn/Gln) amidotransferase subunit C of Burkholderia vietnamiensis (strain G4 / LMG 22486) (Burkholderia cepacia (strain R1808)).